Consider the following 229-residue polypeptide: Large ribosomal subunit protein uL1 (229 aa).

The protein belongs to the universal ribosomal protein uL1 family. As to quaternary structure, part of the 50S ribosomal subunit.

Functionally, binds directly to 23S rRNA. The L1 stalk is quite mobile in the ribosome, and is involved in E site tRNA release. Its function is as follows. Protein L1 is also a translational repressor protein, it controls the translation of the L11 operon by binding to its mRNA. The sequence is that of Large ribosomal subunit protein uL1 from Staphylococcus aureus (strain MRSA252).